Reading from the N-terminus, the 294-residue chain is 4-hydroxy-tetrahydrodipicolinate synthase (294 aa).

Pyruvate is bound at residue T47. Y135 serves as the catalytic Proton donor/acceptor. Residue K163 is the Schiff-base intermediate with substrate of the active site. Residue T205 participates in pyruvate binding.

It belongs to the DapA family. As to quaternary structure, homotetramer; dimer of dimers.

The protein resides in the cytoplasm. The enzyme catalyses L-aspartate 4-semialdehyde + pyruvate = (2S,4S)-4-hydroxy-2,3,4,5-tetrahydrodipicolinate + H2O + H(+). It participates in amino-acid biosynthesis; L-lysine biosynthesis via DAP pathway; (S)-tetrahydrodipicolinate from L-aspartate: step 3/4. Its function is as follows. Catalyzes the condensation of (S)-aspartate-beta-semialdehyde [(S)-ASA] and pyruvate to 4-hydroxy-tetrahydrodipicolinate (HTPA). The polypeptide is 4-hydroxy-tetrahydrodipicolinate synthase (Rickettsia conorii (strain ATCC VR-613 / Malish 7)).